The sequence spans 173 residues: NADH-ubiquinone oxidoreductase chain 6 (173 aa).

The next 4 membrane-spanning stretches (helical) occupy residues 12–32 (VFWLIGVSSNISVYYGVVSLV), 47–67 (GSFLALVLFLIYLGGMLVIFA), 94–114 (VVLAVVFVLVGWGWWGVGECG), and 142–162 (GALMMAMFGLFLTFFIVLVLV).

It belongs to the complex I subunit 6 family.

Its subcellular location is the mitochondrion membrane. It catalyses the reaction a ubiquinone + NADH + 5 H(+)(in) = a ubiquinol + NAD(+) + 4 H(+)(out). In terms of biological role, core subunit of the mitochondrial membrane respiratory chain NADH dehydrogenase (Complex I) that is believed to belong to the minimal assembly required for catalysis. Complex I functions in the transfer of electrons from NADH to the respiratory chain. The immediate electron acceptor for the enzyme is believed to be ubiquinone. The sequence is that of NADH-ubiquinone oxidoreductase chain 6 (MT-ND6) from Pelomedusa subrufa (African side-necked turtle).